A 50-amino-acid polypeptide reads, in one-letter code: Putative protein HokG (50 aa).

A helical membrane pass occupies residues 5–25 (YALVAIIVLCCTVLGFTLMVG).

The protein belongs to the Hok/Gef family.

The protein localises to the cell inner membrane. Toxic component of a type I toxin-antitoxin (TA) system. When overexpressed kills cells within minutes; causes collapse of the transmembrane potential and arrest of respiration. Its toxic effect is probably neutralized by an antisense antitoxin Sok RNA. This is Putative protein HokG (hokG) from Escherichia coli O157:H7.